A 139-amino-acid chain; its full sequence is Transcription antitermination protein NusB (139 aa).

This sequence belongs to the NusB family.

In terms of biological role, involved in transcription antitermination. Required for transcription of ribosomal RNA (rRNA) genes. Binds specifically to the boxA antiterminator sequence of the ribosomal RNA (rrn) operons. In Lactiplantibacillus plantarum (strain ATCC BAA-793 / NCIMB 8826 / WCFS1) (Lactobacillus plantarum), this protein is Transcription antitermination protein NusB.